Reading from the N-terminus, the 379-residue chain is Armadillo repeat-containing X-linked protein 3 (379 aa).

The Mitochondrial intermembrane portion of the chain corresponds to 1-6 (MGYARK). Mitochondrion outer membrane (MOM)-targeting sequence regions lie at residues 1 to 6 (MGYARK) and 26 to 37 (RLTRGRKQNKEK). A helical; Signal-anchor membrane pass occupies residues 7 to 29 (VGWVTAGLVIGAGACYCIYRLTR). Residues 30–379 (GRKQNKEKMA…TERMFPKSQE (350 aa)) are Cytoplasmic-facing. Residues S61, S67, and S72 each carry the phosphoserine modification. The tract at residues 89-98 (RARARARARA) is nuclear localization signal. Residues 95 to 106 (RARATRARRAVQ) are compositionally biased toward basic residues. The disordered stretch occupies residues 95 to 116 (RARATRARRAVQKRASPNSDDT). S110 bears the Phosphoserine mark. 3 ARM repeats span residues 111 to 151 (PNSD…NNAA), 153 to 192 (AFNR…NLSV), and 233 to 272 (VTNE…NLAE).

The protein belongs to the eutherian X-chromosome-specific Armcx family. As to quaternary structure, interacts (via ARM domain) with MIRO1, MIRO2 and TRAK2. The interaction with Miro is calcium-dependent. Interacts with Sox10. Highly expressed in the developing neural tissues, neural crest derivatives and hind limbs. Also widely expressed in the adult nervous tissue, especially in the forebrain, including the cerebral cortex, hippocampus and thalamus.

It is found in the mitochondrion outer membrane. The protein resides in the cytoplasm. The protein localises to the nucleus. Its function is as follows. Regulates mitochondrial aggregation and transport in axons in living neurons. May link mitochondria to the Trak2-kinesin motor complex via its interaction with Miro and Trak2. Mitochondrial distribution and dynamics is regulated through Armcx3 protein degradation, which is promoted by PCK and negatively regulated by Wnt1. Enhances the Sox10-mediated transactivation of the neuronal acetylcholine receptor subunit alpha-3 and beta-4 subunit gene promoters. The chain is Armadillo repeat-containing X-linked protein 3 (Armcx3) from Mus musculus (Mouse).